The following is a 369-amino-acid chain: UDP-3-O-acylglucosamine N-acyltransferase (369 aa).

H263 serves as the catalytic Proton acceptor.

Belongs to the transferase hexapeptide repeat family. LpxD subfamily. As to quaternary structure, homotrimer.

It carries out the reaction a UDP-3-O-[(3R)-3-hydroxyacyl]-alpha-D-glucosamine + a (3R)-hydroxyacyl-[ACP] = a UDP-2-N,3-O-bis[(3R)-3-hydroxyacyl]-alpha-D-glucosamine + holo-[ACP] + H(+). It participates in bacterial outer membrane biogenesis; LPS lipid A biosynthesis. In terms of biological role, catalyzes the N-acylation of UDP-3-O-acylglucosamine using 3-hydroxyacyl-ACP as the acyl donor. Is involved in the biosynthesis of lipid A, a phosphorylated glycolipid that anchors the lipopolysaccharide to the outer membrane of the cell. This chain is UDP-3-O-acylglucosamine N-acyltransferase, found in Burkholderia ambifaria (strain MC40-6).